The following is a 560-amino-acid chain: DNA ligase B (560 aa).

K124 functions as the N6-AMP-lysine intermediate in the catalytic mechanism.

It belongs to the NAD-dependent DNA ligase family. LigB subfamily.

The catalysed reaction is NAD(+) + (deoxyribonucleotide)n-3'-hydroxyl + 5'-phospho-(deoxyribonucleotide)m = (deoxyribonucleotide)n+m + AMP + beta-nicotinamide D-nucleotide.. Functionally, catalyzes the formation of phosphodiester linkages between 5'-phosphoryl and 3'-hydroxyl groups in double-stranded DNA using NAD as a coenzyme and as the energy source for the reaction. The polypeptide is DNA ligase B (Shigella sonnei (strain Ss046)).